A 745-amino-acid chain; its full sequence is uncharacterized protein (745 aa).

The 99-residue stretch at 158–256 (NQVCDYIELH…HQTPKQYRGD (99 aa)) folds into the HTH araC/xylS-type domain. 2 DNA-binding regions (H-T-H motif) span residues 175-196 (SELSEYVGWSESHLSKKFTESL) and 223-246 (ITDIALQNGFSSAASFARTFKHFT).

This is an uncharacterized protein from Staphylococcus aureus (strain MW2).